A 334-amino-acid chain; its full sequence is uncharacterized protein (334 aa).

The next 2 membrane-spanning stretches (helical) occupy residues 19–39 and 55–75; these read AFLR…SFGI and LIVL…AALF. The disordered stretch occupies residues 308 to 334; sequence KPESKSSSQKSVETEIEKEVKDKLAKN. The segment covering 319-334 has biased composition (basic and acidic residues); that stretch reads VETEIEKEVKDKLAKN.

Its subcellular location is the cell membrane. This is an uncharacterized protein from Mycoplasma genitalium (strain ATCC 33530 / DSM 19775 / NCTC 10195 / G37) (Mycoplasmoides genitalium).